A 149-amino-acid chain; its full sequence is Large ribosomal subunit protein bL9 (149 aa).

It belongs to the bacterial ribosomal protein bL9 family.

Functionally, binds to the 23S rRNA. The chain is Large ribosomal subunit protein bL9 from Shewanella amazonensis (strain ATCC BAA-1098 / SB2B).